The following is a 362-amino-acid chain: Phospho-2-dehydro-3-deoxyheptonate aldolase (362 aa).

Belongs to the class-I DAHP synthase family.

It carries out the reaction D-erythrose 4-phosphate + phosphoenolpyruvate + H2O = 7-phospho-2-dehydro-3-deoxy-D-arabino-heptonate + phosphate. It participates in metabolic intermediate biosynthesis; chorismate biosynthesis; chorismate from D-erythrose 4-phosphate and phosphoenolpyruvate: step 1/7. Stereospecific condensation of phosphoenolpyruvate (PEP) and D-erythrose-4-phosphate (E4P) giving rise to 3-deoxy-D-arabino-heptulosonate-7-phosphate (DAHP). This chain is Phospho-2-dehydro-3-deoxyheptonate aldolase (aroG), found in Haemophilus influenzae (strain ATCC 51907 / DSM 11121 / KW20 / Rd).